The sequence spans 89 residues: Defensin-like protein 250 (89 aa).

An N-terminal signal peptide occupies residues 1-23 (MKLAAIFLVSCVLLSLLPSLTIA). 4 disulfide bridges follow: C29/C86, C40/C69, C48/C79, and C67/C81.

The protein belongs to the DEFL family.

The protein localises to the secreted. In Arabidopsis thaliana (Mouse-ear cress), this protein is Defensin-like protein 250 (SCRL8).